A 379-amino-acid chain; its full sequence is Chaperone protein DnaJ (379 aa).

The J domain occupies 7–72 (DYYEVLGVDK…KKRSMYDQFG (66 aa)). The segment at 147 to 225 (GKKAELSYTR…CGGNGLERKK (79 aa)) adopts a CR-type zinc-finger fold. Zn(2+) is bound by residues Cys160, Cys163, Cys177, Cys180, Cys199, Cys202, Cys213, and Cys216. 4 CXXCXGXG motif repeats span residues 160–167 (CSECHGTG), 177–184 (CPDCKGTG), 199–206 (CPTCGGEG), and 213–220 (CKKCGGNG).

The protein belongs to the DnaJ family. In terms of assembly, homodimer. Zn(2+) is required as a cofactor.

It localises to the cytoplasm. Its function is as follows. Participates actively in the response to hyperosmotic and heat shock by preventing the aggregation of stress-denatured proteins and by disaggregating proteins, also in an autonomous, DnaK-independent fashion. Unfolded proteins bind initially to DnaJ; upon interaction with the DnaJ-bound protein, DnaK hydrolyzes its bound ATP, resulting in the formation of a stable complex. GrpE releases ADP from DnaK; ATP binding to DnaK triggers the release of the substrate protein, thus completing the reaction cycle. Several rounds of ATP-dependent interactions between DnaJ, DnaK and GrpE are required for fully efficient folding. Also involved, together with DnaK and GrpE, in the DNA replication of plasmids through activation of initiation proteins. The sequence is that of Chaperone protein DnaJ from Treponema denticola (strain ATCC 35405 / DSM 14222 / CIP 103919 / JCM 8153 / KCTC 15104).